Reading from the N-terminus, the 620-residue chain is Glutathione-regulated potassium-efflux system protein KefC (620 aa).

Helical transmembrane passes span 4 to 24, 26 to 46, 54 to 74, 90 to 110, 114 to 134, 149 to 169, 178 to 198, 218 to 238, 270 to 290, 294 to 314, 327 to 347, and 359 to 379; these read HTLI…PIAV, LGLG…PWGL, SILH…GLEL, GALQ…LLGL, VAEL…MQAM, FAVL…IPLL, MGAF…VVLL, VFSA…EEVG, GLLL…GTLI, LRIV…LWLI, WFAV…GAAQ, and SLTL…VILN. Residues 399–518 enclose the RCK N-terminal domain; it reads QPRVIIAGFG…AGVEKPERET (120 aa). The disordered stretch occupies residues 597 to 620; it reads GWQGTEEGKHTGNMADEPETKPSS.

The protein belongs to the monovalent cation:proton antiporter 2 (CPA2) transporter (TC 2.A.37) family. KefC subfamily. In terms of assembly, homodimer. Interacts with the regulatory subunit KefF.

Its subcellular location is the cell inner membrane. Its function is as follows. Pore-forming subunit of a potassium efflux system that confers protection against electrophiles. Catalyzes K(+)/H(+) antiport. The sequence is that of Glutathione-regulated potassium-efflux system protein KefC from Escherichia coli O17:K52:H18 (strain UMN026 / ExPEC).